A 244-amino-acid chain; its full sequence is tRNA pseudouridine synthase A (244 aa).

The active-site Nucleophile is Asp-52. A substrate-binding site is contributed by Tyr-110.

This sequence belongs to the tRNA pseudouridine synthase TruA family. Homodimer.

The catalysed reaction is uridine(38/39/40) in tRNA = pseudouridine(38/39/40) in tRNA. Formation of pseudouridine at positions 38, 39 and 40 in the anticodon stem and loop of transfer RNAs. In Caldicellulosiruptor bescii (strain ATCC BAA-1888 / DSM 6725 / KCTC 15123 / Z-1320) (Anaerocellum thermophilum), this protein is tRNA pseudouridine synthase A.